Here is a 134-residue protein sequence, read N- to C-terminus: Lymphocyte antigen 6F (134 aa).

An N-terminal signal peptide occupies residues 1–26 (MDSCHTTKSCVLILLVVLLCAERAQG). The UPAR/Ly6 domain occupies 27–119 (LECYNCLGVS…TGGSTWTMTR (93 aa)). 5 cysteine pairs are disulfide-bonded: cysteine 29–cysteine 53, cysteine 32–cysteine 41, cysteine 46–cysteine 74, cysteine 78–cysteine 98, and cysteine 99–cysteine 104. Glycine 112 carries the GPI-anchor amidated glycine lipid modification. Positions 113–134 (STWTMTRVLLLNLGSVFLQTLL) are cleaved as a propeptide — removed in mature form.

It is found in the cell membrane. In Mus musculus (Mouse), this protein is Lymphocyte antigen 6F (Ly6f).